The primary structure comprises 102 residues: UPF0751 protein DSY4013 (102 aa).

The protein belongs to the UPF0751 family.

This chain is UPF0751 protein DSY4013, found in Desulfitobacterium hafniense (strain Y51).